A 659-amino-acid polypeptide reads, in one-letter code: ATP-binding cassette sub-family D member 3 (659 aa).

Residues 1-61 are interaction with PEX19; it reads MAAFSKYLTA…GKKERAVVDK (61 aa). N12 is a glycosylation site (N-linked (GlcNAc...) asparagine). K61 bears the N6-acetyllysine mark. The chain crosses the membrane as a helical span at residues 84-104; it reads GYLLLIAVMLVSRTYCDVWMI. Residues 85–372 enclose the ABC transmembrane type-1 domain; sequence YLLLIAVMLV…MLLRMSQALG (288 aa). N106 carries an N-linked (GlcNAc...) asparagine glycan. A helical transmembrane segment spans residues 126-146; that stretch reads LFNFIAAMPLISLVNNFLKYG. The N-linked (GlcNAc...) asparagine glycan is linked to N206. The helical transmembrane segment at 224 to 244 threads the bilayer; it reads AIGAQGPASMMAYLLVSGLFL. K260 is modified (N6-acetyllysine). The chain crosses the membrane as a helical span at residues 313–333; sequence MGFIDSIIAKYVATVVGYLVV. At K399 the chain carries N6-acetyllysine. Residue S424 is modified to Phosphoserine. Residues 434–659 enclose the ABC transporter domain; sequence INTDNIIKFD…ITEDTVEFGS (226 aa). Residue 473–480 participates in ATP binding; that stretch reads GPNGCGKS. N6-acetyllysine is present on K533. S659 is modified (phosphoserine).

This sequence belongs to the ABC transporter superfamily. ABCD family. Peroxisomal fatty acyl CoA transporter (TC 3.A.1.203) subfamily. As to quaternary structure, homodimers. Can form heterodimers with ABCD1 and ABCD2. Dimerization is necessary to form an active transporter. Interacts with PEX19; mediates the targeting of ABCD3 to peroxisomes. Ubiquitinated by PEX2 during pexophagy in response to starvation, leading to its degradation.

Its subcellular location is the peroxisome membrane. The catalysed reaction is a very long-chain fatty acyl-CoA + H2O = a very long-chain fatty acid + CoA + H(+). It carries out the reaction a very long-chain fatty acid(in) + ATP + H2O = a very long-chain fatty acid(out) + ADP + phosphate + H(+). The enzyme catalyses a long-chain fatty acyl-CoA + H2O = a long-chain fatty acid + CoA + H(+). It catalyses the reaction a long-chain fatty acid(in) + ATP + H2O = a long-chain fatty acid(out) + ADP + phosphate + H(+). The catalysed reaction is pristanoyl-CoA + H2O = 2,6,10,14-tetramethylpentadecanoate + CoA + H(+). It carries out the reaction 2,6,10,14-tetramethylpentadecanoate(in) + ATP + H2O = 2,6,10,14-tetramethylpentadecanoate(out) + ADP + phosphate + H(+). The enzyme catalyses hexadecanedioyl-CoA + H2O = hexadecanedioate + CoA + H(+). It catalyses the reaction hexadecanedioate(in) + ATP + H2O = hexadecanedioate(out) + ADP + phosphate + H(+). The catalysed reaction is (5Z,8Z,11Z,14Z,17Z)-eicosapentaenoyl-CoA + H2O = (5Z,8Z,11Z,14Z,17Z)-eicosapentaenoate + CoA + H(+). It carries out the reaction (5Z,8Z,11Z,14Z,17Z)-eicosapentaenoate(in) + ATP + H2O = (5Z,8Z,11Z,14Z,17Z)-eicosapentaenoate(out) + ADP + phosphate + H(+). The enzyme catalyses (4Z,7Z,10Z,13Z,16Z,19Z)-docosahexaenoyl-CoA + H2O = (4Z,7Z,10Z,13Z,16Z,19Z)-docosahexaenoate + CoA + H(+). It catalyses the reaction (4Z,7Z,10Z,13Z,16Z,19Z)-docosahexaenoate(in) + ATP + H2O = (4Z,7Z,10Z,13Z,16Z,19Z)-docosahexaenoate(out) + ADP + phosphate + H(+). Its function is as follows. Broad substrate specificity ATP-dependent transporter of the ATP-binding cassette (ABC) family that catalyzes the transport of long-chain fatty acids (LCFA)-CoA, dicarboxylic acids-CoA, long-branched-chain fatty acids-CoA and bile acids from the cytosol to the peroxisome lumen for beta-oxydation. Has fatty acyl-CoA thioesterase and ATPase activities. Probably hydrolyzes fatty acyl-CoAs into free fatty acids prior to their ATP-dependent transport into peroxisomes. Thus, play a role in regulation of LCFAs and energy metabolism namely, in the degradation and biosynthesis of fatty acids by beta-oxidation. This chain is ATP-binding cassette sub-family D member 3 (Abcd3), found in Mus musculus (Mouse).